Reading from the N-terminus, the 583-residue chain is Immunity-related GTPase family Q protein (583 aa).

Cysteines 152 and 158 form a disulfide. Residues 155-179 (SDRCEELERLQVVLRTQAEALQRLL) adopt a coiled-coil conformation. The short motif at 186–189 (FEVL) is the LIR 1 element. Phosphothreonine is present on T203. In terms of domain architecture, IRG-type G spans 223–409 (ARLDLAVAGT…PGLGTWLQHA (187 aa)). The tract at residues 322–373 (APLVGVRTDGQGEDPPEVLEEEKAQNASDGNSGDARSEGKKAGIGDSGCTAA) is disordered. Positions 332–341 (QGEDPPEVLE) are enriched in acidic residues. The LIR 2 motif lies at 381–384 (WEVL).

Belongs to the TRAFAC class dynamin-like GTPase superfamily. IRG family. In terms of assembly, interacts (via LIR motif 1) with GABARAPL2. Interacts (via LIR motif 2) with MAP1LC3B/LC3B.

Its subcellular location is the lysosome. The protein localises to the cytoplasmic vesicle. It localises to the autophagosome. Functionally, autophagy receptor that specifically promotes clearance of misfolded MHC class I molecules by targeting them to the lysosome for degradation. Acts as a molecular adapter that specifically recognizes and binds (1) misfolded MHC class I molecules following their ubiquitination, as well as (2) autophagy-related proteins, promoting the recruitment of misfolded MHC class I molecules to autophagy machinery for degradation. Degradation of misfolded MHC class I molecules is essential to prevent accumulation of defective MHC class I complexes at the surface of CD8(+) T-cells and prevent a stronger T-cell-mediated response. In contrast to other members of the family, does not show GTPase activity. The sequence is that of Immunity-related GTPase family Q protein (Irgq) from Mus musculus (Mouse).